A 123-amino-acid chain; its full sequence is Small ribosomal subunit protein uS13 (123 aa).

Basic residues predominate over residues 99-113 (RGQRTHTNARTRKGG). The tract at residues 99–123 (RGQRTHTNARTRKGGSRLAVAAKKK) is disordered.

It belongs to the universal ribosomal protein uS13 family. As to quaternary structure, part of the 30S ribosomal subunit. Forms a loose heterodimer with protein S19. Forms two bridges to the 50S subunit in the 70S ribosome.

Functionally, located at the top of the head of the 30S subunit, it contacts several helices of the 16S rRNA. In the 70S ribosome it contacts the 23S rRNA (bridge B1a) and protein L5 of the 50S subunit (bridge B1b), connecting the 2 subunits; these bridges are implicated in subunit movement. Contacts the tRNAs in the A and P-sites. The polypeptide is Small ribosomal subunit protein uS13 (Anaplasma phagocytophilum (strain HZ)).